Reading from the N-terminus, the 538-residue chain is UNC93-like protein (538 aa).

N-linked (GlcNAc...) asparagine glycosylation is present at N45. 5 consecutive transmembrane segments (helical) span residues 46-66, 80-100, 105-125, 128-148, and 170-190; these read ISII…TANL, SLSA…TLII, VKWT…FQLF, FYTL…MWAS, and AIIV…ELWG. An N-linked (GlcNAc...) asparagine glycan is attached at N210. 7 consecutive transmembrane segments (helical) span residues 244 to 264, 305 to 325, 338 to 358, 366 to 386, 394 to 414, 435 to 455, and 457 to 477; these read IFEI…IIAF, LLIP…ADFT, IGFV…LFGS, TPII…ELFW, IIFY…QTQI, LWES…CTQM, and LYIL…VEIL.

The protein belongs to the unc-93 family.

It localises to the membrane. The protein is UNC93-like protein of Drosophila melanogaster (Fruit fly).